We begin with the raw amino-acid sequence, 360 residues long: Peptide chain release factor 1 (360 aa).

Gln-235 is subject to N5-methylglutamine. Residues 285 to 295 are compositionally biased toward basic and acidic residues; sequence RQAAEQTDMRR. The interval 285–309 is disordered; the sequence is RQAAEQTDMRRNLLGSGDRSDKIRT.

This sequence belongs to the prokaryotic/mitochondrial release factor family. Post-translationally, methylated by PrmC. Methylation increases the termination efficiency of RF1.

The protein resides in the cytoplasm. In terms of biological role, peptide chain release factor 1 directs the termination of translation in response to the peptide chain termination codons UAG and UAA. This is Peptide chain release factor 1 (prfA) from Haemophilus influenzae (strain ATCC 51907 / DSM 11121 / KW20 / Rd).